The chain runs to 312 residues: uncharacterized protein (312 aa).

Disordered regions lie at residues 1–26 and 45–106; these read MQKD…AMVA and GNLQ…LPSG. Residues 8-17 are compositionally biased toward basic residues; it reads RFQRNKKKIN. Residues 68-77 are compositionally biased toward basic and acidic residues; sequence NGKRNGDKVR. Residues 85–103 show a composition bias toward polar residues; the sequence is GHSSYAGSRISGGNSNSHL.

This is an uncharacterized protein from Schizosaccharomyces pombe (strain 972 / ATCC 24843) (Fission yeast).